A 1413-amino-acid chain; its full sequence is DNA-directed RNA polymerase subunit beta' (1413 aa).

Cys70, Cys72, Cys85, and Cys88 together coordinate Zn(2+). The Mg(2+) site is built by Asp460, Asp462, and Asp464. Zn(2+)-binding residues include Cys814, Cys888, Cys895, and Cys898.

Belongs to the RNA polymerase beta' chain family. The RNAP catalytic core consists of 2 alpha, 1 beta, 1 beta' and 1 omega subunit. When a sigma factor is associated with the core the holoenzyme is formed, which can initiate transcription. It depends on Mg(2+) as a cofactor. Zn(2+) serves as cofactor.

It carries out the reaction RNA(n) + a ribonucleoside 5'-triphosphate = RNA(n+1) + diphosphate. Its function is as follows. DNA-dependent RNA polymerase catalyzes the transcription of DNA into RNA using the four ribonucleoside triphosphates as substrates. The sequence is that of DNA-directed RNA polymerase subunit beta' from Bordetella avium (strain 197N).